The chain runs to 371 residues: Chaperone protein DnaJ (371 aa).

In terms of domain architecture, J spans 5 to 70; that stretch reads CYYEILNVSK…SKRSRYDQFG (66 aa). Residues 127–204 form a CR-type zinc finger; sequence GVEKEITIPR…CYGNGKVKKQ (78 aa). Zn(2+) is bound by residues cysteine 140, cysteine 143, cysteine 156, cysteine 159, cysteine 178, cysteine 181, cysteine 192, and cysteine 195. CXXCXGXG motif repeat units lie at residues 140–147, 156–163, 178–185, and 192–199; these read CDSCDGTG, CHACHGQG, CPVCNGTG, and CDACYGNG.

The protein belongs to the DnaJ family. Homodimer. Zn(2+) serves as cofactor.

The protein localises to the cytoplasm. Its function is as follows. Participates actively in the response to hyperosmotic and heat shock by preventing the aggregation of stress-denatured proteins and by disaggregating proteins, also in an autonomous, DnaK-independent fashion. Unfolded proteins bind initially to DnaJ; upon interaction with the DnaJ-bound protein, DnaK hydrolyzes its bound ATP, resulting in the formation of a stable complex. GrpE releases ADP from DnaK; ATP binding to DnaK triggers the release of the substrate protein, thus completing the reaction cycle. Several rounds of ATP-dependent interactions between DnaJ, DnaK and GrpE are required for fully efficient folding. Also involved, together with DnaK and GrpE, in the DNA replication of plasmids through activation of initiation proteins. This Francisella tularensis subsp. tularensis (strain WY96-3418) protein is Chaperone protein DnaJ.